The following is a 101-amino-acid chain: Urease subunit beta (101 aa).

The protein belongs to the urease beta subunit family. In terms of assembly, heterotrimer of UreA (gamma), UreB (beta) and UreC (alpha) subunits. Three heterotrimers associate to form the active enzyme.

It localises to the cytoplasm. The enzyme catalyses urea + 2 H2O + H(+) = hydrogencarbonate + 2 NH4(+). It functions in the pathway nitrogen metabolism; urea degradation; CO(2) and NH(3) from urea (urease route): step 1/1. In Burkholderia orbicola (strain AU 1054), this protein is Urease subunit beta.